Here is a 320-residue protein sequence, read N- to C-terminus: tRNA-cytidine(32) 2-sulfurtransferase (320 aa).

A PP-loop motif motif is present at residues 54–59 (SGGKDS). Residues C129, C132, and C220 each contribute to the [4Fe-4S] cluster site.

Belongs to the TtcA family. In terms of assembly, homodimer. Requires Mg(2+) as cofactor. [4Fe-4S] cluster serves as cofactor.

Its subcellular location is the cytoplasm. It carries out the reaction cytidine(32) in tRNA + S-sulfanyl-L-cysteinyl-[cysteine desulfurase] + AH2 + ATP = 2-thiocytidine(32) in tRNA + L-cysteinyl-[cysteine desulfurase] + A + AMP + diphosphate + H(+). The protein operates within tRNA modification. Its function is as follows. Catalyzes the ATP-dependent 2-thiolation of cytidine in position 32 of tRNA, to form 2-thiocytidine (s(2)C32). The sulfur atoms are provided by the cysteine/cysteine desulfurase (IscS) system. This is tRNA-cytidine(32) 2-sulfurtransferase from Bordetella pertussis (strain Tohama I / ATCC BAA-589 / NCTC 13251).